A 355-amino-acid chain; its full sequence is DNA polymerase IV (355 aa).

The 182-residue stretch at 6 to 187 folds into the UmuC domain; sequence IIHVDMDAFY…LPVGKIHGVG (182 aa). Asp10 and Asp105 together coordinate Mg(2+). Glu106 is a catalytic residue.

It belongs to the DNA polymerase type-Y family. In terms of assembly, monomer. Requires Mg(2+) as cofactor.

Its subcellular location is the cytoplasm. The catalysed reaction is DNA(n) + a 2'-deoxyribonucleoside 5'-triphosphate = DNA(n+1) + diphosphate. Poorly processive, error-prone DNA polymerase involved in untargeted mutagenesis. Copies undamaged DNA at stalled replication forks, which arise in vivo from mismatched or misaligned primer ends. These misaligned primers can be extended by PolIV. Exhibits no 3'-5' exonuclease (proofreading) activity. May be involved in translesional synthesis, in conjunction with the beta clamp from PolIII. The protein is DNA polymerase IV of Alkalilimnicola ehrlichii (strain ATCC BAA-1101 / DSM 17681 / MLHE-1).